The sequence spans 462 residues: UDP-N-acetylmuramoylalanine--D-glutamate ligase (462 aa).

Position 109 to 115 (109 to 115 (GTDGKST)) interacts with ATP.

This sequence belongs to the MurCDEF family.

The protein localises to the cytoplasm. The enzyme catalyses UDP-N-acetyl-alpha-D-muramoyl-L-alanine + D-glutamate + ATP = UDP-N-acetyl-alpha-D-muramoyl-L-alanyl-D-glutamate + ADP + phosphate + H(+). The protein operates within cell wall biogenesis; peptidoglycan biosynthesis. Functionally, cell wall formation. Catalyzes the addition of glutamate to the nucleotide precursor UDP-N-acetylmuramoyl-L-alanine (UMA). This is UDP-N-acetylmuramoylalanine--D-glutamate ligase from Leptospira borgpetersenii serovar Hardjo-bovis (strain JB197).